A 156-amino-acid polypeptide reads, in one-letter code: MIP18 family protein galla-2 (156 aa).

Belongs to the MIP18 family. Component of the CGX complex composed of crb, galla (galla-1 or galla-2) and Xpd. Interacts with crb (via intracellular domain). Also able to interact with Xpd in the absence of crb. Interacts with Mms19.

Its function is as follows. Component of the crb-galla-Xpd (CGX) complex which is essential for proper mitotic chromosome segregation in early embryos. The CGX complex is also required for cell proliferation in developing wing disks. In the CGX complex, acts with crb to recruit Xpd thus forming the functional complex. The chain is MIP18 family protein galla-2 from Drosophila melanogaster (Fruit fly).